Reading from the N-terminus, the 1377-residue chain is Dicer-like protein 2 (1377 aa).

One can recognise a Helicase ATP-binding domain in the interval M23–S203. An ATP-binding site is contributed by M36–T43. Residues D144–H147 carry the DEAH box motif. The Helicase C-terminal domain maps to A368–R531. Residues V561–R655 enclose the Dicer dsRNA-binding fold domain. RNase III domains lie at R914–G1052 and D1092–G1275. Mg(2+)-binding residues include E1131, D1261, and E1264.

The protein belongs to the helicase family. Dicer subfamily. Mg(2+) is required as a cofactor. Mn(2+) serves as cofactor.

Its function is as follows. Dicer-like endonuclease involved in cleaving double-stranded RNA in the RNA interference (RNAi) pathway. Produces 21 to 25 bp dsRNAs (siRNAs) which target the selective destruction of homologous RNAs leading to sequence-specific suppression of gene expression, called post-transcriptional gene silencing (PTGS). Part of a broad host defense response against viral infection and transposons. The protein is Dicer-like protein 2 (dcl2) of Aspergillus oryzae (strain ATCC 42149 / RIB 40) (Yellow koji mold).